The primary structure comprises 188 residues: Large ribosomal subunit protein uL5 (188 aa).

The protein belongs to the universal ribosomal protein uL5 family. As to quaternary structure, part of the 50S ribosomal subunit; part of the 5S rRNA/L5/L18/L25 subcomplex. Contacts the 5S rRNA and the P site tRNA. Forms a bridge to the 30S subunit in the 70S ribosome.

This is one of the proteins that bind and probably mediate the attachment of the 5S RNA into the large ribosomal subunit, where it forms part of the central protuberance. In the 70S ribosome it contacts protein S13 of the 30S subunit (bridge B1b), connecting the 2 subunits; this bridge is implicated in subunit movement. Contacts the P site tRNA; the 5S rRNA and some of its associated proteins might help stabilize positioning of ribosome-bound tRNAs. The protein is Large ribosomal subunit protein uL5 of Aquifex pyrophilus.